Reading from the N-terminus, the 309-residue chain is Gamma-hemolysin component A (309 aa).

The first 29 residues, 1–29 (MIKNKILTATLAVGLIAPLANPFIEISKA), serve as a signal peptide directing secretion.

This sequence belongs to the aerolysin family. In terms of assembly, toxicity requires sequential binding and synergistic association of a class S and a class F component which form heterooligomeric complexes. HlgA (class S) associates with HlgB (class F) thus forming an AB toxin in strains producing both gamma-hemolysins and leukocidins. HlgA and LukF-PV can also form a complex.

Its subcellular location is the secreted. Toxin that seems to act by forming pores in the membrane of the cell. Has a hemolytic and a leucotoxic activity. The polypeptide is Gamma-hemolysin component A (hlgA) (Staphylococcus aureus (strain MRSA252)).